Consider the following 23-residue polypeptide: Paralytic peptide 2 (23 aa).

C7 and C19 are oxidised to a cystine.

Belongs to the GBP/PSP1/paralytic peptide family. In terms of tissue distribution, hemolymph.

Its function is as follows. Causes rapid, rigid paralysis when injected into Lepidopteran larvae. The physiological role may be to reduce hemolymph loss following injury and promote wound healing. The polypeptide is Paralytic peptide 2 (Spodoptera exigua (Beet armyworm)).